Reading from the N-terminus, the 466-residue chain is 3-isopropylmalate dehydratase large subunit (466 aa).

The [4Fe-4S] cluster site is built by Cys347, Cys407, and Cys410.

The protein belongs to the aconitase/IPM isomerase family. LeuC type 1 subfamily. In terms of assembly, heterodimer of LeuC and LeuD. [4Fe-4S] cluster is required as a cofactor.

It carries out the reaction (2R,3S)-3-isopropylmalate = (2S)-2-isopropylmalate. It participates in amino-acid biosynthesis; L-leucine biosynthesis; L-leucine from 3-methyl-2-oxobutanoate: step 2/4. In terms of biological role, catalyzes the isomerization between 2-isopropylmalate and 3-isopropylmalate, via the formation of 2-isopropylmaleate. This is 3-isopropylmalate dehydratase large subunit from Escherichia fergusonii (strain ATCC 35469 / DSM 13698 / CCUG 18766 / IAM 14443 / JCM 21226 / LMG 7866 / NBRC 102419 / NCTC 12128 / CDC 0568-73).